We begin with the raw amino-acid sequence, 250 residues long: Pre-protein VI (250 aa).

Residues 1–33 constitute a propeptide that is removed on maturation; that stretch reads MEDINFASLAPRHGSRPFMGNWQDIGTSNMSGG. The tract at residues 34 to 54 is amphipathic alpha-helix essential for membrane lytic activity; the sequence is AFSWGSLWSGIKNFGSTVKNY. The segment at 36–53 is involved in endosomal membrane lysis; it reads SWGSLWSGIKNFGSTVKN. Positions 48–74 are interaction with hexon protein; sequence GSTVKNYGSKAWNSSTGQMLRDKLKEQ. The Nuclear export signal motif lies at 67 to 76; the sequence is LRDKLKEQNF. Positions 103-148 are disordered; the sequence is INSKLDPRPPVEEPPPAVETVSPEGRGEKRPRPDREETLVTQIDEP. Serine 124 is subject to Phosphoserine; by host. A compositionally biased stretch (basic and acidic residues) spans 127–140; the sequence is GRGEKRPRPDREET. The short motif at 131 to 135 is the Nuclear localization signal element; it reads KRPRP. The residue at position 143 (threonine 143) is a Phosphothreonine; by host. The PPXY motif motif lies at 148–151; sequence PPSY. The Nuclear export signal motif lies at 231-242; the sequence is STLNSIVGLGVQ. Positions 233-239 are interaction with hexon protein; that stretch reads LNSIVGL. A binds to importin alpha/beta, involved in hexon nuclear import region spans residues 240-250; it reads GVQSLKRRRCF. Residues 245–248 carry the Nuclear localization signal motif; it reads KRRR.

The protein belongs to the adenoviridae protein VI family. In terms of assembly, interacts with hexon protein; this interaction allows nuclear import of hexon trimers and possibly pre-capsid assembly. Interacts (via C-terminal NLS) with importin alpha/beta. As to quaternary structure, interacts (via PPxY motif) with host NEDD4 ubiquitine ligase; this interaction might play a role in virus intracellular transport during entry. Part of a complex composed of the core-capsid bridging protein, the endosome lysis protein VI and the hexon-linking protein VIII; these interactions bridge the virus core to the capsid. Interacts with peripentonal hexons; this interaction stabilizes the capsid by gluing two peripentonal hexons together and joining them with an adjacent group-of-nine hexon. Heterodimer with the viral protease; disulfide-linked. Interacts with the viral protease. Ubiquitinated by Nedd4 following partial capsid disassembly; which might play a role in intracellular virus movement during entry. In terms of processing, contains the major nuclear import and export signals. Proteolytically removed during virion maturation. The processing of the C-terminus turns the precursor into a mature viral structural protein and abrogates its ability to promote hexon import and act as a potential chaperone protein.

The protein localises to the host nucleus. It localises to the host cytoplasm. It is found in the virion. During virus assembly, promotes hexon trimers nuclear import through nuclear pore complexes via an importin alpha/beta-dependent mechanism. By analogy to herpesviruses capsid assembly, might act as a chaperone to promote the formation of the icosahedral capsid. Functionally, structural component of the virion that provides increased stability to the particle shell through its interaction with the core-capsid bridging protein and the hexon-linking protein VIII. Fibers shedding during virus entry into host cell allows the endosome lysis protein to be exposed as a membrane-lytic peptide. Exhibits pH-independent membrane fragmentation activity and probably mediates viral rapid escape from host endosome via organellar membrane lysis. It is not clear if it then remains partially associated with the capsid and involved in the intracellular microtubule-dependent transport of capsid to the nucleus, or if it is lost during endosomal penetration. Its function is as follows. Cofactor that activates the viral protease. Binds to viral protease in a 1:1 ratio. The sequence is that of Pre-protein VI from Homo sapiens (Human).